Consider the following 202-residue polypeptide: Alpha-1-acid glycoprotein (202 aa).

An N-terminal signal peptide occupies residues 1–18; the sequence is MALLWALAVLSHLPLLDA. 5 N-linked (GlcNAc...) asparagine glycosylation sites follow: Asn34, Asn57, Asn94, Asn104, and Asn136. Cys91 and Cys184 form a disulfide bridge.

This sequence belongs to the calycin superfamily. Lipocalin family.

The protein localises to the secreted. Functionally, functions as a transport protein in the blood stream. Binds various ligands in the interior of its beta-barrel domain. Appears to function in modulating the activity of the immune system during the acute-phase reaction. The protein is Alpha-1-acid glycoprotein (ORM1) of Bos taurus (Bovine).